Consider the following 209-residue polypeptide: Uracil phosphoribosyltransferase (209 aa).

5-phospho-alpha-D-ribose 1-diphosphate is bound by residues arginine 79, arginine 104, and 131-139; that span reads DPMLATGGS. Uracil is bound by residues valine 194 and 199 to 201; that span reads GDA. A 5-phospho-alpha-D-ribose 1-diphosphate-binding site is contributed by aspartate 200.

It belongs to the UPRTase family. Requires Mg(2+) as cofactor.

The enzyme catalyses UMP + diphosphate = 5-phospho-alpha-D-ribose 1-diphosphate + uracil. It participates in pyrimidine metabolism; UMP biosynthesis via salvage pathway; UMP from uracil: step 1/1. Allosterically activated by GTP. Catalyzes the conversion of uracil and 5-phospho-alpha-D-ribose 1-diphosphate (PRPP) to UMP and diphosphate. The polypeptide is Uracil phosphoribosyltransferase (Bacillus cytotoxicus (strain DSM 22905 / CIP 110041 / 391-98 / NVH 391-98)).